A 215-amino-acid polypeptide reads, in one-letter code: High mobility group protein B1 (215 aa).

1-10 (MGKGDPKKPR) provides a ligand contact to heparin. A sufficient for interaction with HAVCR2 region spans residues 1 to 97 (MGKGDPKKPR…KFKDPNAPKR (97 aa)). N6-acetyllysine occurs at positions 3, 7, 8, and 12. The segment at 3-15 (KGDPKKPRGKMSS) is LPS binding (delipidated). The segment at residues 9 to 79 (PRGKMSSYAF…RYEREMKTYI (71 aa)) is a DNA-binding region (HMG box 1). Residue C23 is modified to Cysteine sulfonic acid (-SO3H); alternate. The cysteines at positions 23 and 45 are disulfide-linked. Positions 27 to 43 (HKKKHPDASVNFSEFSK) are NLS 1. Positions 27–43 (HKKKHPDASVNFSEFSK) match the Nuclear localization signal (NLS) 1 motif. N6-acetyllysine occurs at positions 28, 29, and 30. K28 is covalently cross-linked (Isoglutamyl lysine isopeptide (Lys-Gln) (interchain with Q-?)). S35 carries the phosphoserine modification. The residue at position 43 (K43) is an N6-acetyllysine. Isoglutamyl lysine isopeptide (Lys-Gln) (interchain with Q-?) cross-links involve residues K43 and K44. C45 is subject to Cysteine sulfonic acid (-SO3H); alternate. Residue K68 forms an Isoglutamyl lysine isopeptide (Lys-Gln) (interchain with Q-?) linkage. The segment at 76–95 (KTYIPPKGETKKKFKDPNAP) is disordered. The tract at residues 80–96 (PPKGETKKKFKDPNAPK) is LPS binding (Lipid A). Positions 83–94 (GETKKKFKDPNA) are enriched in basic and acidic residues. The interval 89-108 (FKDPNAPKRPPSAFFLFCSE) is cytokine-stimulating activity. An N6-acetyllysine modification is found at K90. The segment at residues 95–163 (PKRPPSAFFL…KYEKDIAAYR (69 aa)) is a DNA-binding region (HMG box 2). Position 100 is a phosphoserine (S100). Residue C106 is modified to Cysteine sulfonic acid (-SO3H). Residues K127, K128, K141, K172, K173, K177, and K180 each carry the N6-acetyllysine modification. The segment at 150–183 (KLKEKYEKDIAAYRAKGKPDAAKKGVVKAEKSKK) is binding to AGER/RAGE. Over residues 161 to 179 (AYRAKGKPDAAKKGVVKAE) the composition is skewed to basic and acidic residues. Residues 161–215 (AYRAKGKPDAAKKGVVKAEKSKKKKEEEDDEEDEEDEEEEEEEEDEDEEEDDDDE) form a disordered region. The NLS 2 stretch occupies residues 178–184 (AEKSKKK). Positions 178-184 (AEKSKKK) match the Nuclear localization signal (NLS) 2 motif. K180 is covalently cross-linked (Isoglutamyl lysine isopeptide (Lys-Gln) (interchain with Q-?)). Residue S181 is modified to ADP-ribosylserine. 4 positions are modified to N6-acetyllysine: K182, K183, K184, and K185. Isoglutamyl lysine isopeptide (Lys-Gln) (interchain with Q-?) cross-links involve residues K182, K183, and K184. Acidic residues predominate over residues 187–215 (EEDDEEDEEDEEEEEEEEDEDEEEDDDDE).

The protein belongs to the HMGB family. Interacts (fully reduced HMGB1) with CXCL12; probably in a 1:2 ratio involving two molecules of CXCL12, each interacting with one HMG box of HMGB1; inhibited by glycyrrhizin. Associates with the TLR4:LY96 receptor complex. Component of the RAG complex composed of core components RAG1 and RAG2, and associated component HMGB1 or HMGB2. Interacts (in cytoplasm upon starvation) with BECN1; inhibits the interaction of BECN1 and BCL2 leading to promotion of autophagy. Interacts with KPNA1; involved in nuclear import. Interacts with SREBF1, TLR2, TLR4, TLR9, APEX1, FEN1, POLB, TERT. Interacts with AGER, PTPRZ1, IL1B, MSH2, XPA, XPC, HNF1A, TP53. Interacts with CD24; the probable CD24:SIGLEC10 complex is proposed to inhibit HGMB1-mediated tissue damage immune response. Interacts with THBD; prevents HGMB1 interaction with ACER/RAGE and inhibits HGMB1 pro-inflammatory activity. Interacts with HAVCR2; impairs HMGB1 binding to B-DNA and likely HMGB1-mediated innate immune response. Interacts with XPO1; mediating nuclear export. Interacts with receptor RAGE/AGER. Post-translationally, acetylated on multiple sites upon stimulation with LPS. Acetylation on lysine residues in the nuclear localization signals (NLS 1 and NLS 2) leads to cytoplasmic localization and subsequent secretion. Acetylation on Lys-3 results in preferential binding to DNA ends and impairs DNA bending activity. Phosphorylated at serine residues. Phosphorylation in both NLS regions is required for cytoplasmic translocation followed by secretion. In terms of processing, reduction/oxidation of cysteine residues Cys-23, Cys-45 and Cys-106 and a possible intramolecular disulfide bond involving Cys-23 and Cys-45 give rise to different redox forms with specific functional activities in various cellular compartments: 1- Fully reduced HGMB1 (HMGB1C23hC45hC106h), 2- Disulfide HMGB1 (HMGB1C23-C45C106h) and 3- Sulfonyl HMGB1 (HMGB1C23soC45soC106so). Post-translationally, poly-ADP-ribosylated by PARP1 when secreted following stimulation with LPS. In vitro cleavage by CASP1 is liberating a HMG box 1-containing peptide which may mediate immunogenic activity; the peptide antagonizes apoptosis-induced immune tolerance. Can be proteolytically cleaved by a thrombin:thrombomodulin complex; reduces binding to heparin and pro-inflammatory activities. In terms of processing, forms covalent cross-links mediated by transglutaminase TGM2, between a glutamine and the epsilon-amino group of a lysine residue, forming homopolymers and heteropolymers. As to expression, serum levels are found elevated in mice with modeled systemic lupus erythematosus (SLE) and are correlated with SLE disease activity.

It localises to the nucleus. The protein localises to the cytoplasm. Its subcellular location is the chromosome. The protein resides in the cell membrane. It is found in the endosome. It localises to the endoplasmic reticulum-Golgi intermediate compartment. The protein localises to the secreted. Functionally, multifunctional redox sensitive protein with various roles in different cellular compartments. In the nucleus is one of the major chromatin-associated non-histone proteins and acts as a DNA chaperone involved in replication, transcription, chromatin remodeling, V(D)J recombination, DNA repair and genome stability. Proposed to be an universal biosensor for nucleic acids. Promotes host inflammatory response to sterile and infectious signals and is involved in the coordination and integration of innate and adaptive immune responses. In the cytoplasm functions as a sensor and/or chaperone for immunogenic nucleic acids implicating the activation of TLR9-mediated immune responses, and mediates autophagy. Acts as a danger associated molecular pattern (DAMP) molecule that amplifies immune responses during tissue injury. Released to the extracellular environment can bind DNA, nucleosomes, IL-1 beta, CXCL12, AGER isoform 2/sRAGE, lipopolysaccharide (LPS) and lipoteichoic acid (LTA), and activates cells through engagement of multiple surface receptors. In the extracellular compartment fully reduced HMGB1 (released by necrosis) acts as a chemokine, disulfide HMGB1 (actively secreted) as a cytokine, and sulfonyl HMGB1 (released from apoptotic cells) promotes immunological tolerance. Has proangiogenic activity. May be involved in platelet activation. Binds to phosphatidylserine and phosphatidylethanolamide. Bound to RAGE mediates signaling for neuronal outgrowth. May play a role in accumulation of expanded polyglutamine (polyQ) proteins. Nuclear functions are attributed to fully reduced HGMB1. Associates with chromatin and binds DNA with a preference to non-canonical DNA structures such as single-stranded DNA, DNA-containing cruciforms or bent structures, supercoiled DNA and ZDNA. Can bent DNA and enhance DNA flexibility by looping thus providing a mechanism to promote activities on various gene promoters by enhancing transcription factor binding and/or bringing distant regulatory sequences into close proximity. May be involved in nucleotide excision repair (NER), mismatch repair (MMR) and base excision repair (BER) pathways, and double strand break repair such as non-homologous end joining (NHEJ). Involved in V(D)J recombination by acting as a cofactor of the RAG complex: acts by stimulating cleavage and RAG protein binding at the 23 bp spacer of conserved recombination signal sequences (RSS). In vitro can displace histone H1 from highly bent DNA. Can restructure the canonical nucleosome leading to relaxation of structural constraints for transcription factor-binding. Enhances binding of sterol regulatory element-binding proteins (SREBPs) such as SREBF1 to their cognate DNA sequences and increases their transcriptional activities. Facilitates binding of TP53 to DNA. Proposed to be involved in mitochondrial quality control and autophagy in a transcription-dependent fashion implicating HSPB1; however, this function has been questioned. Can modulate the activity of the telomerase complex and may be involved in telomere maintenance. In terms of biological role, in the cytoplasm proposed to dissociate the BECN1:BCL2 complex via competitive interaction with BECN1 leading to autophagy activation. Can protect BECN1 and ATG5 from calpain-mediated cleavage and thus proposed to control their proautophagic and proapoptotic functions and to regulate the extent and severity of inflammation-associated cellular injury. In myeloid cells has a protective role against endotoxemia and bacterial infection by promoting autophagy. Involved in endosomal translocation and activation of TLR9 in response to CpG-DNA in macrophages. Its function is as follows. In the extracellular compartment (following either active secretion or passive release) involved in regulation of the inflammatory response. Fully reduced HGMB1 (which subsequently gets oxidized after release) in association with CXCL12 mediates the recruitment of inflammatory cells during the initial phase of tissue injury; the CXCL12:HMGB1 complex triggers CXCR4 homodimerization. Induces the migration of monocyte-derived immature dendritic cells and seems to regulate adhesive and migratory functions of neutrophils implicating AGER/RAGE and ITGAM. Can bind to various types of DNA and RNA including microbial unmethylated CpG-DNA to enhance the innate immune response to nucleic acids. Proposed to act in promiscuous DNA/RNA sensing which cooperates with subsequent discriminative sensing by specific pattern recognition receptors. Promotes extracellular DNA-induced AIM2 inflammasome activation implicating AGER/RAGE. Disulfide HMGB1 binds to transmembrane receptors, such as AGER/RAGE, TLR2, TLR4 and probably TREM1, thus activating their signal transduction pathways. Mediates the release of cytokines/chemokines such as TNF, IL-1, IL-6, IL-8, CCL2, CCL3, CCL4 and CXCL10. Promotes secretion of interferon-gamma by macrophage-stimulated natural killer (NK) cells in concert with other cytokines like IL-2 or IL-12. TLR4 is proposed to be the primary receptor promoting macrophage activation and signaling through TLR4 seems to implicate LY96/MD-2. In bacterial LPS- or LTA-mediated inflammatory responses binds to the endotoxins and transfers them to CD14 for signaling to the respective TLR4:LY96 and TLR2 complexes. Contributes to tumor proliferation by association with ACER/RAGE. Can bind to IL1-beta and signals through the IL1R1:IL1RAP receptor complex. Binding to class A CpG activates cytokine production in plasmacytoid dendritic cells implicating TLR9, MYD88 and AGER/RAGE and can activate autoreactive B cells. Via HMGB1-containing chromatin immune complexes may also promote B cell responses to endogenous TLR9 ligands through a B-cell receptor (BCR)-dependent and ACER/RAGE-independent mechanism. Inhibits phagocytosis of apoptotic cells by macrophages; the function is dependent on poly-ADP-ribosylation and involves binding to phosphatidylserine on the cell surface of apoptotic cells. In adaptive immunity may be involved in enhancing immunity through activation of effector T-cells and suppression of regulatory T (TReg) cells. In contrast, without implicating effector or regulatory T-cells, required for tumor infiltration and activation of T-cells expressing the lymphotoxin LTA:LTB heterotrimer thus promoting tumor malignant progression. Also reported to limit proliferation of T-cells. Released HMGB1:nucleosome complexes formed during apoptosis can signal through TLR2 to induce cytokine production. Involved in induction of immunological tolerance by apoptotic cells; its pro-inflammatory activities when released by apoptotic cells are neutralized by reactive oxygen species (ROS)-dependent oxidation specifically on Cys-106. During macrophage activation by activated lymphocyte-derived self apoptotic DNA (ALD-DNA) promotes recruitment of ALD-DNA to endosomes. The chain is High mobility group protein B1 (Hmgb1) from Mus musculus (Mouse).